A 232-amino-acid chain; its full sequence is Orotidine 5'-phosphate decarboxylase (232 aa).

Residues Asp11, Lys33, 60-69 (DLKFHDIPTT), Thr120, Arg181, Gln191, Gly211, and Arg212 each bind substrate. Residue Lys62 is the Proton donor of the active site.

The protein belongs to the OMP decarboxylase family. Type 1 subfamily. As to quaternary structure, homodimer.

It carries out the reaction orotidine 5'-phosphate + H(+) = UMP + CO2. Its pathway is pyrimidine metabolism; UMP biosynthesis via de novo pathway; UMP from orotate: step 2/2. Functionally, catalyzes the decarboxylation of orotidine 5'-monophosphate (OMP) to uridine 5'-monophosphate (UMP). The chain is Orotidine 5'-phosphate decarboxylase from Tolumonas auensis (strain DSM 9187 / NBRC 110442 / TA 4).